The sequence spans 515 residues: Chromosomal replication initiator protein DnaA (515 aa).

The segment at 1–89 (MVADQAVLSS…LLAISIDANL (89 aa)) is domain I, interacts with DnaA modulators. The domain II stretch occupies residues 89-172 (LQPPRTPSSE…APPSTSAETS (84 aa)). Disordered regions lie at residues 90–130 (QPPR…SRRA) and 142–171 (PPAD…SAET). Low complexity-rich tracts occupy residues 102 to 114 (SSLA…AAAP) and 143 to 160 (PADV…NGKP). Residues 173 to 389 (RLNDRYHFET…GALIRVTAFA (217 aa)) form a domain III, AAA+ region region. Gly-217, Gly-219, Lys-220, and Thr-221 together coordinate ATP. The segment at 390–515 (SLNRQTVDIE…NEIKRKQRGA (126 aa)) is domain IV, binds dsDNA.

Belongs to the DnaA family. Oligomerizes as a right-handed, spiral filament on DNA at oriC.

The protein resides in the cytoplasm. Functionally, plays an essential role in the initiation and regulation of chromosomal replication. ATP-DnaA binds to the origin of replication (oriC) to initiate formation of the DNA replication initiation complex once per cell cycle. Binds the DnaA box (a 9 base pair repeat at the origin) and separates the double-stranded (ds)DNA. Forms a right-handed helical filament on oriC DNA; dsDNA binds to the exterior of the filament while single-stranded (ss)DNA is stabiized in the filament's interior. The ATP-DnaA-oriC complex binds and stabilizes one strand of the AT-rich DNA unwinding element (DUE), permitting loading of DNA polymerase. After initiation quickly degrades to an ADP-DnaA complex that is not apt for DNA replication. Binds acidic phospholipids. The protein is Chromosomal replication initiator protein DnaA of Micrococcus luteus (strain ATCC 4698 / DSM 20030 / JCM 1464 / CCM 169 / CCUG 5858 / IAM 1056 / NBRC 3333 / NCIMB 9278 / NCTC 2665 / VKM Ac-2230) (Micrococcus lysodeikticus).